The chain runs to 328 residues: MVKRLVVTAGEPAGIGPDLVLALSKEHWPHQLVVCADKKMLAQRAEQLGINVTLLDYDASTAPSPQQAGTLVVEHIDMPSTCVAGQLNEENGHYVLKTLERAALGCMKSEFDAIVTGPVHKGVINRAGVAFSGHTEFFAELSNTPLVVMMLATEGLRVALVTTHIPLAYVSKAVTAERLQKIIDILHRDLVEKFAIAEPKIYVCGLNPHAGEDGCLGREEIETITPTLEKIRQEKGIHLLGPLPADTIFNEKYLNDADAVLGMYHDQVLPVLKYKGFGQSVNITLGLPFIRTSVDHGTALDLAGTGQANTGSFRTALQHAIELVEKKQ.

Residues His134 and Thr135 each coordinate substrate. Positions 164, 209, and 265 each coordinate a divalent metal cation. Residues Lys273, Asn282, and Arg291 each coordinate substrate.

This sequence belongs to the PdxA family. In terms of assembly, homodimer. It depends on Zn(2+) as a cofactor. Mg(2+) serves as cofactor. Requires Co(2+) as cofactor.

It localises to the cytoplasm. The enzyme catalyses 4-(phosphooxy)-L-threonine + NAD(+) = 3-amino-2-oxopropyl phosphate + CO2 + NADH. It participates in cofactor biosynthesis; pyridoxine 5'-phosphate biosynthesis; pyridoxine 5'-phosphate from D-erythrose 4-phosphate: step 4/5. Functionally, catalyzes the NAD(P)-dependent oxidation of 4-(phosphooxy)-L-threonine (HTP) into 2-amino-3-oxo-4-(phosphooxy)butyric acid which spontaneously decarboxylates to form 3-amino-2-oxopropyl phosphate (AHAP). This chain is 4-hydroxythreonine-4-phosphate dehydrogenase, found in Vibrio vulnificus (strain YJ016).